The primary structure comprises 107 residues: Phosphoribosyl-ATP pyrophosphatase (107 aa).

Belongs to the PRA-PH family.

It is found in the cytoplasm. It carries out the reaction 1-(5-phospho-beta-D-ribosyl)-ATP + H2O = 1-(5-phospho-beta-D-ribosyl)-5'-AMP + diphosphate + H(+). It participates in amino-acid biosynthesis; L-histidine biosynthesis; L-histidine from 5-phospho-alpha-D-ribose 1-diphosphate: step 2/9. The sequence is that of Phosphoribosyl-ATP pyrophosphatase (hisE) from Neisseria meningitidis serogroup B (strain ATCC BAA-335 / MC58).